Here is a 415-residue protein sequence, read N- to C-terminus: Histidine--tRNA ligase (415 aa).

It belongs to the class-II aminoacyl-tRNA synthetase family. As to quaternary structure, homodimer.

It localises to the cytoplasm. It carries out the reaction tRNA(His) + L-histidine + ATP = L-histidyl-tRNA(His) + AMP + diphosphate + H(+). The polypeptide is Histidine--tRNA ligase (Rickettsia bellii (strain RML369-C)).